The chain runs to 524 residues: 2-isopropylmalate synthase (524 aa).

Positions 12–274 constitute a Pyruvate carboxyltransferase domain; the sequence is VIIFDTTLRD…WNRIESKMLT (263 aa). Residues aspartate 21, histidine 209, histidine 211, and asparagine 245 each coordinate Mn(2+). A regulatory domain region spans residues 398–524; that stretch reads RLKSLTVIAG…QDAPAVAVAG (127 aa).

Belongs to the alpha-IPM synthase/homocitrate synthase family. LeuA type 1 subfamily. Homodimer. Mn(2+) serves as cofactor.

It localises to the cytoplasm. It carries out the reaction 3-methyl-2-oxobutanoate + acetyl-CoA + H2O = (2S)-2-isopropylmalate + CoA + H(+). Its pathway is amino-acid biosynthesis; L-leucine biosynthesis; L-leucine from 3-methyl-2-oxobutanoate: step 1/4. Functionally, catalyzes the condensation of the acetyl group of acetyl-CoA with 3-methyl-2-oxobutanoate (2-ketoisovalerate) to form 3-carboxy-3-hydroxy-4-methylpentanoate (2-isopropylmalate). In Rhodopseudomonas palustris (strain BisB5), this protein is 2-isopropylmalate synthase.